The chain runs to 144 residues: Transmembrane protein 170A (144 aa).

Topologically, residues 1–50 (MEREGSGGSGGSAGLLQQILSLKVVPRVGNGTLCPNSTSLCSFPEMWYGV) are lumenal. N-linked (GlcNAc...) asparagine glycans are attached at residues N30 and N36. The helical transmembrane segment at 51-71 (FLWALVSSLFFHVPAGLLALF) threads the bilayer. Over 72 to 85 (TLRHHKYGRFMSVS) the chain is Cytoplasmic. The helical transmembrane segment at 86–106 (ILLMGIVGPITAGILTSAAIA) threads the bilayer. The Lumenal segment spans residues 107–116 (GVYRAAGKEM). A helical membrane pass occupies residues 117–137 (IPFEALTLGTGQTFCVLVVSF). The Cytoplasmic segment spans residues 138-144 (LRILATL).

The protein belongs to the TMEM170 family. As to quaternary structure, interacts with RTN4.

It is found in the endoplasmic reticulum membrane. It localises to the nucleus envelope. Its function is as follows. Acts as a regulator of endoplasmic reticulum (ER) and nuclear envelope (NE) morphogenesis. Affects the ratio between tubular ER and ER sheets by promoting sheet formation at the expense of tubules. Influences NE expansion, nuclear pore complex formation and proper localization of inner nuclear membrane proteins. This chain is Transmembrane protein 170A (TMEM170A), found in Homo sapiens (Human).